The chain runs to 616 residues: Probable methyltransferase PMT2 (616 aa).

At 1–13 the chain is on the cytoplasmic side; it reads MALKSSSADGKTR. The helical; Signal-anchor for type II membrane protein transmembrane segment at 14 to 34 threads the bilayer; that stretch reads SSVQIFIVFSLCCFFYILGAW. The Lumenal segment spans residues 35-616; it reads QRSGFGKGDS…YWVTNSTSTH (582 aa). N-linked (GlcNAc...) asparagine glycans are attached at residues asparagine 205 and asparagine 611.

This sequence belongs to the methyltransferase superfamily.

Its subcellular location is the golgi apparatus membrane. This is Probable methyltransferase PMT2 from Arabidopsis thaliana (Mouse-ear cress).